The following is a 302-amino-acid chain: Phosphoribosylaminoimidazole-succinocarboxamide synthase (302 aa).

It belongs to the SAICAR synthetase family.

It carries out the reaction 5-amino-1-(5-phospho-D-ribosyl)imidazole-4-carboxylate + L-aspartate + ATP = (2S)-2-[5-amino-1-(5-phospho-beta-D-ribosyl)imidazole-4-carboxamido]succinate + ADP + phosphate + 2 H(+). Its pathway is purine metabolism; IMP biosynthesis via de novo pathway; 5-amino-1-(5-phospho-D-ribosyl)imidazole-4-carboxamide from 5-amino-1-(5-phospho-D-ribosyl)imidazole-4-carboxylate: step 1/2. The polypeptide is Phosphoribosylaminoimidazole-succinocarboxamide synthase (Leptothrix cholodnii (strain ATCC 51168 / LMG 8142 / SP-6) (Leptothrix discophora (strain SP-6))).